A 193-amino-acid chain; its full sequence is Peptidyl-tRNA hydrolase (193 aa).

Tyr-16 provides a ligand contact to tRNA. Catalysis depends on His-21, which acts as the Proton acceptor. The tRNA site is built by Phe-66, Asn-68, and Asn-114.

Belongs to the PTH family. As to quaternary structure, monomer.

It localises to the cytoplasm. It carries out the reaction an N-acyl-L-alpha-aminoacyl-tRNA + H2O = an N-acyl-L-amino acid + a tRNA + H(+). In terms of biological role, hydrolyzes ribosome-free peptidyl-tRNAs (with 1 or more amino acids incorporated), which drop off the ribosome during protein synthesis, or as a result of ribosome stalling. Functionally, catalyzes the release of premature peptidyl moieties from peptidyl-tRNA molecules trapped in stalled 50S ribosomal subunits, and thus maintains levels of free tRNAs and 50S ribosomes. In Trichlorobacter lovleyi (strain ATCC BAA-1151 / DSM 17278 / SZ) (Geobacter lovleyi), this protein is Peptidyl-tRNA hydrolase.